The sequence spans 268 residues: Phosphatidylglycerol--prolipoprotein diacylglyceryl transferase (268 aa).

7 consecutive transmembrane segments (helical) span residues 27–47 (PALR…MWLL), 66–86 (LLFY…VLFY), 104–124 (GGMS…YIAW), 130–150 (FFAV…AGRI), 181–201 (PSQL…LYWF), 208–228 (VGAV…IVET), and 242–262 (FMTM…YLIL). Arg149 lines the a 1,2-diacyl-sn-glycero-3-phospho-(1'-sn-glycerol) pocket.

It belongs to the Lgt family.

The protein resides in the cell inner membrane. It catalyses the reaction L-cysteinyl-[prolipoprotein] + a 1,2-diacyl-sn-glycero-3-phospho-(1'-sn-glycerol) = an S-1,2-diacyl-sn-glyceryl-L-cysteinyl-[prolipoprotein] + sn-glycerol 1-phosphate + H(+). Its pathway is protein modification; lipoprotein biosynthesis (diacylglyceryl transfer). Functionally, catalyzes the transfer of the diacylglyceryl group from phosphatidylglycerol to the sulfhydryl group of the N-terminal cysteine of a prolipoprotein, the first step in the formation of mature lipoproteins. The chain is Phosphatidylglycerol--prolipoprotein diacylglyceryl transferase from Shewanella sp. (strain ANA-3).